The sequence spans 551 residues: Serine beta-lactamase-like protein LACTB, mitochondrial (551 aa).

The N-terminal 113 residues, 1–113 (MYRLLSSVTA…RAIESSRDLL (113 aa)), are a transit peptide targeting the mitochondrion. The disordered stretch occupies residues 69 to 101 (PADPEASGTTELSHEQALSPGSPHTPAPPAARG). Serine 162 (acyl-ester intermediate) is an active-site residue. The tract at residues 237–287 (LKMVKGTPPPSDQEKELKEKGGKNNEKSDAPKAKVEQDSEARCRSAKPGKK) is disordered. The segment covering 248-279 (DQEKELKEKGGKNNEKSDAPKAKVEQDSEARC) has biased composition (basic and acidic residues). N6-succinyllysine occurs at positions 287 and 288. An N6-acetyllysine mark is found at lysine 301 and lysine 346.

The protein belongs to the peptidase S12 family. Expressed predominantly in liver.

The protein localises to the mitochondrion. Functionally, mitochondrial serine protease that acts as a regulator of mitochondrial lipid metabolism. Acts by decreasing protein levels of PISD, a mitochondrial enzyme that converts phosphatidylserine (PtdSer) to phosphatidylethanolamine (PtdEtn), thereby affecting mitochondrial lipid metabolism. It is unclear whether it acts directly by mediating proteolysis of PISD or by mediating proteolysis of another lipid metabolism protein. Acts as a tumor suppressor that has the ability to inhibit proliferation of multiple types of cancer cells: probably by promoting decreased levels of PISD, thereby affecting mitochondrial lipid metabolism. This chain is Serine beta-lactamase-like protein LACTB, mitochondrial, found in Mus musculus (Mouse).